The primary structure comprises 495 residues: Lysine--tRNA ligase (495 aa).

The Mg(2+) site is built by Glu-406 and Glu-413.

It belongs to the class-II aminoacyl-tRNA synthetase family. As to quaternary structure, homodimer. It depends on Mg(2+) as a cofactor.

The protein resides in the cytoplasm. The enzyme catalyses tRNA(Lys) + L-lysine + ATP = L-lysyl-tRNA(Lys) + AMP + diphosphate. The polypeptide is Lysine--tRNA ligase (lysS) (Staphylococcus aureus).